Reading from the N-terminus, the 113-residue chain is MNTVRVTFLLVFVLAVSLGQADKDENRMEMQEKTEQGESYLDFAENLLLQKLEELEAKLLEEDSEESRNSRQKRCIGEGVPCDENDPRCCSGLVCLKPTLHGIWYKSYYCYKK.

An N-terminal signal peptide occupies residues 1–21; it reads MNTVRVTFLLVFVLAVSLGQA. A propeptide spanning residues 22 to 74 is cleaved from the precursor; the sequence is DKDENRMEMQEKTEQGESYLDFAENLLLQKLEELEAKLLEEDSEESRNSRQKR. Disulfide bonds link C75–C90, C82–C95, and C89–C110.

This sequence belongs to the neurotoxin 14 (magi-1) family. 01 (HNTX-16) subfamily. In terms of tissue distribution, expressed by the venom gland.

The protein resides in the secreted. In terms of biological role, probable ion channel inhibitor. This Cyriopagopus hainanus (Chinese bird spider) protein is U11-theraphotoxin-Hhn1a.